Here is a 124-residue protein sequence, read N- to C-terminus: Small ribosomal subunit protein uS12 (124 aa).

A 3-methylthioaspartic acid modification is found at Asp-89.

The protein belongs to the universal ribosomal protein uS12 family. In terms of assembly, part of the 30S ribosomal subunit. Contacts proteins S8 and S17. May interact with IF1 in the 30S initiation complex.

In terms of biological role, with S4 and S5 plays an important role in translational accuracy. Functionally, interacts with and stabilizes bases of the 16S rRNA that are involved in tRNA selection in the A site and with the mRNA backbone. Located at the interface of the 30S and 50S subunits, it traverses the body of the 30S subunit contacting proteins on the other side and probably holding the rRNA structure together. The combined cluster of proteins S8, S12 and S17 appears to hold together the shoulder and platform of the 30S subunit. This Leptospira biflexa serovar Patoc (strain Patoc 1 / Ames) protein is Small ribosomal subunit protein uS12.